Here is a 101-residue protein sequence, read N- to C-terminus: Large ribosomal subunit protein uL23 (101 aa).

This sequence belongs to the universal ribosomal protein uL23 family. Part of the 50S ribosomal subunit. Contacts protein L29, and trigger factor when it is bound to the ribosome.

Its function is as follows. One of the early assembly proteins it binds 23S rRNA. One of the proteins that surrounds the polypeptide exit tunnel on the outside of the ribosome. Forms the main docking site for trigger factor binding to the ribosome. This chain is Large ribosomal subunit protein uL23, found in Lactobacillus helveticus (strain DPC 4571).